The following is a 488-amino-acid chain: MSVTYDDSVGVEVSSDSFWEVGNYKRTVKRIDDGHRLCGDLMNCLHERARIEKAYAQQLTEWARRWRQLVEKGPQYGTVEKAWMAVMSEAERVSELHLEVKASLMNEDFEKIKNWQKEAFHKQMMGGFKETKEAEDGFRKAQKPWAKKLKEVDAAKKAHHTACKEEKLAVSREANSKADPSLNPEQLKKLQDKIEKCKQDVLKTKDKYEKALKELDQTTPQYMENMEQVFEQCQQFEEKRLRFFREVLLEVQKHLDLSNVASYKGIYRELEQSIKAADAVEDLRWFRANHGPGMAMNWPQFEDEEWSADLNRTLSRREKKKAADGVTLTGINQTGDQSGQNKPSSNLSVPSNPAQSTQLQSSYNPFEDEDDTGSSVSEKEDIKAKNVSSYEKTQNYPADWSDDESNNPFSSTDANGDSNPFDEDTTSGTEVRVRALYDYEGQEHDELSFKAGDELTKIEDEDEQGWCKGRLDSGQVGLYPANYVEAIQ.

The F-BAR domain maps to 11 to 282; that stretch reads VEVSSDSFWE…SIKAADAVED (272 aa). A coiled-coil region spans residues 25–274; the sequence is KRTVKRIDDG…GIYRELEQSI (250 aa). Position 53 is an N6-acetyllysine (Lys-53). Residues 163–176 are compositionally biased toward basic and acidic residues; the sequence is CKEEKLAVSREANS. Positions 163-183 are disordered; sequence CKEEKLAVSREANSKADPSLN. Ser-273 is subject to Phosphoserine. Residue Ser-315 is modified to Phosphoserine; by PKC. Residues 316–429 form a disordered region; that stretch reads RREKKKAADG…PFDEDTTSGT (114 aa). Positions 329-364 are enriched in polar residues; sequence TGINQTGDQSGQNKPSSNLSVPSNPAQSTQLQSSYN. Residues 364-366 carry the NPF1 motif; sequence NPF. Ser-375 carries the post-translational modification Phosphoserine; by IKKB. Polar residues predominate over residues 386 to 396; the sequence is NVSSYEKTQNY. The residue at position 401 (Ser-401) is a Phosphoserine. Over residues 406 to 418 the composition is skewed to polar residues; it reads NNPFSSTDANGDS. The NPF2 signature appears at 407–409; the sequence is NPF. Positions 419–421 match the NPF3 motif; sequence NPF. In terms of domain architecture, SH3 spans 428 to 488; the sequence is GTEVRVRALY…YPANYVEAIQ (61 aa). Residue Ser-448 is modified to Phosphoserine.

It belongs to the PACSIN family. As to quaternary structure, homodimer. May form heterooligomers with other PACSINs. Interacts (via NPF motifs) with EHD1 (via EH domain). Interacts with EHD3. Interacts (via the SH3 domain) with MICALL1. Interacts with RAC1. Interacts (via SH3 domain) with DNM1, SYN1, SYNJ1 and WASL. Interacts with CAV1. Interacts with TRPV4. Forms a complex with EHD4 and MICALL1; the complex controls CDH5 trafficking and coordinates angiogenesis. In terms of processing, phosphorylated by casein kinase 2 (CK2) and protein kinase C (PKC). Phosphorylation by PKC probably decreases the membrane binding and tubulation capacities of PACSIN2, thereby modulating the lifetime of caveolae. In terms of tissue distribution, widely expressed (at protein level). Isoforms 1/3 are predominantly expressed in heart and in PC-12 cells, a pheochromocytoma cell line (at protein level). Isoforms 2/4 are widely expressed with highest levels in muscle, testis and brain (at protein level).

It is found in the cytoplasm. The protein localises to the cytoskeleton. The protein resides in the cytoplasmic vesicle membrane. Its subcellular location is the cell projection. It localises to the ruffle membrane. It is found in the early endosome. The protein localises to the recycling endosome membrane. The protein resides in the cell membrane. Its subcellular location is the membrane. It localises to the caveola. It is found in the cell junction. The protein localises to the adherens junction. Regulates the morphogenesis and endocytosis of caveolae. Lipid-binding protein that is able to promote the tubulation of the phosphatidic acid-containing membranes it preferentially binds. Plays a role in intracellular vesicle-mediated transport. Involved in the endocytosis of cell-surface receptors like the EGF receptor, contributing to its internalization in the absence of EGF stimulus. Facilitates endothelial front-rear polarity during migration by recruiting EHD4 and MICALL1 to asymmetric adherens junctions between leader and follower cells. This chain is Protein kinase C and casein kinase substrate in neurons 2 protein (Pacsin2), found in Rattus norvegicus (Rat).